Here is a 275-residue protein sequence, read N- to C-terminus: MLKAAGIGVRLAGRWLLEQVNLEALPGEVLAVVGPNGAGKSTLLKTLAGEIRPTRGSVSMAGKALADWPARERACVRAVLPQNSTLAFAFRVFEVVLMGRTPHSRGLEGERDRQIAREAMAAAGVAHLAERLYPTLSGGEKQRVQLARVLAQIWEAPPDSPRYLLLDEPTASLDLTHQHSTLAVARNFAHRGAAVVTVLHDLNLAAQYADRLALLKDGKLLVVGVPDIVLTPEWIETGFGLQTLVMRHPRLGCPLVIPLGSASVLQPGEQLAHGK.

The ABC transporter domain occupies 2 to 242 (LKAAGIGVRL…EWIETGFGLQ (241 aa)). Residue 34-41 (GPNGAGKS) participates in ATP binding.

This sequence belongs to the ABC transporter superfamily. Heme (hemin) importer (TC 3.A.1.14.5) family. The complex is composed of two ATP-binding proteins (HmuV), two transmembrane proteins (HmuU) and a solute-binding protein (HmuT).

It is found in the cell inner membrane. Functionally, part of the ABC transporter complex HmuTUV involved in hemin import. Responsible for energy coupling to the transport system. The chain is Hemin import ATP-binding protein HmuV from Gloeobacter violaceus (strain ATCC 29082 / PCC 7421).